A 390-amino-acid polypeptide reads, in one-letter code: UPF0496 protein At1g20180 (390 aa).

2 helical membrane-spanning segments follow: residues 228–248 (LGGY…LIIA) and 250–270 (HSIL…FCLL).

The protein belongs to the UPF0496 family.

The protein resides in the membrane. The sequence is that of UPF0496 protein At1g20180 from Arabidopsis thaliana (Mouse-ear cress).